Reading from the N-terminus, the 760-residue chain is Colleterpenol synthase (760 aa).

A terpene cyclase region spans residues 14–335; the sequence is ASSGLRSKFR…YTRRYPSKAD (322 aa). Mg(2+) is bound at residue Asp95. The DDXXD 1 motif lies at 95–99; the sequence is DDYYD. Residues 233 to 241 carry the NSE/DTE motif; the sequence is NDLYSWPKE. Residues 336–759 are prenyltransferase; the sequence is LRQPEVEFVD…LELVLRRLWI (424 aa). Residues 359–400 are disordered; sequence EEKVVSESVESLPTTEVEDEFSSSDASPGSVDQAISTPPSTT. A compositionally biased stretch (polar residues) spans 391 to 400; sequence QAISTPPSTT. Isopentenyl diphosphate is bound by residues Lys477, Arg480, and His509. Residues Asp516 and Asp520 each coordinate Mg(2+). The short motif at 516 to 520 is the DDXXD 2 element; that stretch reads DDIED. Arg525 contributes to the dimethylallyl diphosphate binding site. Arg526 lines the isopentenyl diphosphate pocket. The dimethylallyl diphosphate site is built by Lys605, Thr606, Gln643, Asn650, Lys660, and Lys670.

This sequence in the N-terminal section; belongs to the terpene synthase family. It in the C-terminal section; belongs to the FPP/GGPP synthase family. As to quaternary structure, hexamer. It depends on Mg(2+) as a cofactor.

The catalysed reaction is 5 isopentenyl diphosphate + dimethylallyl diphosphate = all-trans-hexaprenyl diphosphate + 5 diphosphate. It catalyses the reaction all-trans-hexaprenyl diphosphate + H2O = colleterpenol + diphosphate. Functionally, bifunctional terpene synthase that converts dimethylallyl diphosphate (DMAPP) and isopentenyl diphosphate (IPP) into colleterpenol as a single product. The C-terminal prenyltransferase (PT) domain of CgCS catalyzes formation of hexaprenyl diphosphate (HexPP), whereas the N-terminal terpene cyclase (TC) domain catalyzes the cyclization of HexPP to colleterpenol. The chain is Colleterpenol synthase from Colletotrichum gloeosporioides (Anthracnose fungus).